The following is a 153-amino-acid chain: Insulin-like growth factor 1 (153 aa).

The tract at residues 49–77 (GPETLCGAELVDALQFVCGDRGFYFNKPT) is b. Disulfide bonds link cysteine 54/cysteine 96, cysteine 66/cysteine 109, and cysteine 95/cysteine 100. The interval 78-89 (GYGSSSRRAPQT) is c. Residues 90 to 110 (GIVDECCFRSCDLRRLEMYCA) are a. Positions 111-118 (PLKPAKSA) are d. The propeptide at 119-153 (RSVRAQRHTDMPKAQKEVHLKNTSRGSSGNKNYRM) is e peptide. Positions 120-153 (SVRAQRHTDMPKAQKEVHLKNTSRGSSGNKNYRM) are disordered. Residues 125–138 (RHTDMPKAQKEVHL) show a composition bias toward basic and acidic residues. Positions 139–153 (KNTSRGSSGNKNYRM) are enriched in polar residues.

It belongs to the insulin family. In terms of assembly, forms a ternary complex with IGFR1 and ITGAV:ITGB3. Forms a ternary complex with IGFR1 and ITGA6:ITGB4. Forms a ternary complex with IGFBP3 and ALS.

The protein resides in the secreted. Its function is as follows. The insulin-like growth factors, isolated from plasma, are structurally and functionally related to insulin but have a much higher growth-promoting activity. May be a physiological regulator of [1-14C]-2-deoxy-D-glucose (2DG) transport and glycogen synthesis in osteoblasts. Stimulates glucose transport in bone-derived osteoblastic (PyMS) cells and is effective at much lower concentrations than insulin, not only regarding glycogen and DNA synthesis but also with regard to enhancing glucose uptake. May play a role in synapse maturation. Ca(2+)-dependent exocytosis of IGF1 is required for sensory perception of smell in the olfactory bulb. Acts as a ligand for IGF1R. Binds to the alpha subunit of IGF1R, leading to the activation of the intrinsic tyrosine kinase activity which autophosphorylates tyrosine residues in the beta subunit thus initiating a cascade of down-stream signaling events leading to activation of the PI3K-AKT/PKB and the Ras-MAPK pathways. Binds to integrins ITGAV:ITGB3 and ITGA6:ITGB4. Its binding to integrins and subsequent ternary complex formation with integrins and IGFR1 are essential for IGF1 signaling. Induces the phosphorylation and activation of IGFR1, MAPK3/ERK1, MAPK1/ERK2 and AKT1. As part of the MAPK/ERK signaling pathway, acts as a negative regulator of apoptosis in cardiomyocytes via promotion of STUB1/CHIP-mediated ubiquitination and degradation of ICER-type isoforms of CREM. The sequence is that of Insulin-like growth factor 1 from Sus scrofa (Pig).